We begin with the raw amino-acid sequence, 206 residues long: Urease accessory protein UreG (206 aa).

Glycine 13–threonine 20 is a GTP binding site.

This sequence belongs to the SIMIBI class G3E GTPase family. UreG subfamily. Homodimer. UreD, UreF and UreG form a complex that acts as a GTP-hydrolysis-dependent molecular chaperone, activating the urease apoprotein by helping to assemble the nickel containing metallocenter of UreC. The UreE protein probably delivers the nickel.

It is found in the cytoplasm. In terms of biological role, facilitates the functional incorporation of the urease nickel metallocenter. This process requires GTP hydrolysis, probably effectuated by UreG. The chain is Urease accessory protein UreG from Haloquadratum walsbyi (strain DSM 16790 / HBSQ001).